Here is a 629-residue protein sequence, read N- to C-terminus: Probable alpha-L-arabinofuranosidase A (629 aa).

The signal sequence occupies residues 1–25 (MVALSTLSGLSALPFLFSLVQNVYG). Residues Asn-36, Asn-51, Asn-140, Asn-152, Asn-168, Asn-171, Asn-260, Asn-494, and Asn-534 are each glycosylated (N-linked (GlcNAc...) asparagine).

The protein belongs to the glycosyl hydrolase 51 family.

Its subcellular location is the secreted. The catalysed reaction is Hydrolysis of terminal non-reducing alpha-L-arabinofuranoside residues in alpha-L-arabinosides.. It functions in the pathway glycan metabolism; L-arabinan degradation. Its function is as follows. Alpha-L-arabinofuranosidase involved in the degradation of arabinoxylan, a major component of plant hemicellulose. Acts only on small linear 1,5-alpha-linked L-arabinofuranosyl oligosaccharides. The polypeptide is Probable alpha-L-arabinofuranosidase A (abfA) (Aspergillus flavus (strain ATCC 200026 / FGSC A1120 / IAM 13836 / NRRL 3357 / JCM 12722 / SRRC 167)).